Here is a 495-residue protein sequence, read N- to C-terminus: Protein SLENDER RICE1-LIKE 1 (495 aa).

The 373-residue stretch at 77 to 449 folds into the GRAS domain; that stretch reads EEEEVAGIRL…RPLFSASAWE (373 aa). The leucine repeat I (LRI) stretch occupies residues 84–140; that stretch reads IRLVHLLMSCAGAIEAGDHALASAQLADSHAALAAVSAASGIGRVAVHFTTALSRRL. The VHIID stretch occupies residues 158-223; it reads YHHFYEACPY…GGPPFLRITG (66 aa). Residues 189–193 carry the VHIID motif; it reads VHVID. The leucine repeat II (LRII) stretch occupies residues 237 to 269; sequence DVGLRLADLARSVRVRFSFRGVAANSLDEVRPW. A PFYRE region spans residues 279–371; it reads VAFNSVLQLH…EAYLQREICD (93 aa). The short motif at 287–291 is the LXXLL motif element; it reads LHRLL. Residues 374–449 form an SAW region; that stretch reads CGEGAARRER…RPLFSASAWE (76 aa). A disordered region spans residues 451 to 495; that stretch reads AGDGGGDNNNNSNSNVSGSSGSDSNNSGSSNGKSSGARDGSSVCL. Residues 458 to 485 show a composition bias toward low complexity; it reads NNNNSNSNVSGSSGSDSNNSGSSNGKSS.

Belongs to the GRAS family. Expressed in elongating internodes and flowers. Expressed in floral meristem, stamen primordia and tapetum in developing anthers. Expressed at low levels in roots, shoot apices and rachis.

It localises to the nucleus. Probable transcriptional regulator that acts as a repressor of the gibberellin (GA) signaling pathway. Its repressive activity is weaker than that of SLR1. Its overexpression prevents the GA signaling pathway and induces a dwarf phenotype. This Oryza sativa subsp. japonica (Rice) protein is Protein SLENDER RICE1-LIKE 1.